A 355-amino-acid polypeptide reads, in one-letter code: Molybdenum import ATP-binding protein ModC (355 aa).

The ABC transporter domain maps to 1–233; it reads MTLIVEAKQR…PSAAADRKEA (233 aa). ATP is bound at residue 31-38; the sequence is GRSGSGKT. A Mop domain is found at 291–355; the sequence is GLSALNILEG…AIIKTVALEG (65 aa).

This sequence belongs to the ABC transporter superfamily. Molybdate importer (TC 3.A.1.8) family. In terms of assembly, the complex is composed of two ATP-binding proteins (ModC), two transmembrane proteins (ModB) and a solute-binding protein (ModA).

It is found in the cell inner membrane. It carries out the reaction molybdate(out) + ATP + H2O = molybdate(in) + ADP + phosphate + H(+). In terms of biological role, part of the ABC transporter complex ModABC involved in molybdenum import. Responsible for energy coupling to the transport system. The chain is Molybdenum import ATP-binding protein ModC from Rhizobium etli (strain ATCC 51251 / DSM 11541 / JCM 21823 / NBRC 15573 / CFN 42).